Reading from the N-terminus, the 1141-residue chain is cGMP-inhibited 3',5'-cyclic phosphodiesterase 3A (1141 aa).

Positions 1–41 are disordered; the sequence is MAVRGEAAQDWAKPGLRGPSPAPVARGDHRCRGGSPSSPRG. Residues 62–82 form a helical membrane-spanning segment; the sequence is SALCAGSLSVLLALLVRLVGG. The segment at 89-111 is disordered; that stretch reads ESSQEAAAEEEEEEGARGGVFPG. Transmembrane regions (helical) follow at residues 127-147, 157-177, 182-202, 207-227, and 229-249; these read LQPAALLFSLLCAFFWMGLCL, AVALLAACCAGEALVQLSLGV, LLSLPAAGVLLSCLGGATWLV, LGVLMVALTSALRTVALVSLE, and FKVAWRPYLAYLAAVLGLLLA. Positions 262–309 are disordered; it reads PAPPRERFGSQSSARTKEEIPGWKRRRRSSSVVAGEMSGCGGKSHRRT. S310 carries the phosphoserine modification. Positions 433–445 are enriched in low complexity; that stretch reads RVSSTWTTTTSAT. The segment at 433–479 is disordered; sequence RVSSTWTTTTSATGLPTLEPAPVRRDRSASIKPHEAPSPSAVNPDSW. A compositionally biased stretch (basic and acidic residues) spans 454–467; the sequence is PVRRDRSASIKPHE. Phosphoserine is present on residues S492, S520, S524, and S533. A disordered region spans residues 504-643; sequence HVKAKKQNRP…SDILQNDEEA (140 aa). A compositionally biased stretch (pro residues) spans 522 to 532; that stretch reads VPSPSSSPPQG. Over residues 618-637 the composition is skewed to polar residues; that stretch reads TSQVTSDYETNNNSDSSDIL. An interaction with SLFN12 region spans residues 669-1141; it reads KPILAPEPLV…EETLAPQPDL (473 aa). A PDEase domain is found at 674 to 1093; that stretch reads PEPLVMDNLD…MMWKKVIEEE (420 aa). H752 (proton donor) is an active-site residue. An AMP-binding site is contributed by H752. Residues H756, H836, D837, and D950 each contribute to the Mn(2+) site. AMP contacts are provided by D837, D950, and Q1001. Residue D837 participates in Mg(2+) binding. Disordered stretches follow at residues 1024-1062 and 1098-1141; these read GKWVDDSDDSGDTDDPEEEEEEAETPHEEETCENSEAPR and GTEN…QPDL. A compositionally biased stretch (acidic residues) spans 1029 to 1046; the sequence is DSDDSGDTDDPEEEEEEA. Position 1033 is a phosphoserine (S1033). T1036 carries the post-translational modification Phosphothreonine. Over residues 1098–1113 the composition is skewed to polar residues; the sequence is GTENQAPDQAPLQHSS. Residue K1120 forms a Glycyl lysine isopeptide (Lys-Gly) (interchain with G-Cter in SUMO2) linkage.

This sequence belongs to the cyclic nucleotide phosphodiesterase family. PDE3 subfamily. Homodimer. Interacts with PDE3A; direct low affinity interaction which is stimulated by binding of 17beta-estradiol/E2 to PDE3A and that positively regulates the ribonuclease activity of SLFN12. Mn(2+) is required as a cofactor. It depends on Mg(2+) as a cofactor.

It localises to the membrane. Its subcellular location is the cytoplasm. The protein localises to the cytosol. It catalyses the reaction a nucleoside 3',5'-cyclic phosphate + H2O = a nucleoside 5'-phosphate + H(+). The catalysed reaction is 3',5'-cyclic AMP + H2O = AMP + H(+). It carries out the reaction 3',5'-cyclic GMP + H2O = GMP + H(+). The enzyme catalyses 3',5'-cyclic UMP + H2O = UMP + H(+). In terms of biological role, cyclic nucleotide phosphodiesterase with specificity for the second messengers cAMP and cGMP, which are key regulators of many important physiological processes. Also has activity toward cUMP. Independently of its catalytic activity it is part of an E2/17beta-estradiol-induced pro-apoptotic signaling pathway. E2 stabilizes the PDE3A/SLFN12 complex in the cytosol, promoting the dephosphorylation of SLFN12 and activating its pro-apoptotic ribosomal RNA/rRNA ribonuclease activity. This apoptotic pathway might be relevant in tissues with high concentration of E2 and be for instance involved in placenta remodeling. This Rattus norvegicus (Rat) protein is cGMP-inhibited 3',5'-cyclic phosphodiesterase 3A.